The chain runs to 237 residues: MRPSGRTPEQLRPITITRQYTCHAEGSVLVEFGRTKVLCTATVTEGVPRFLKGKGQGWVTAEYGMLPRSTHSRMHREAASGKQGGRTLEIQRLIARSLRAAVDLTKLGENTITVDCDVLQADGGTRTASITGACVALADALNWMLAKGSLKTNPLNFMVAAVSVGIYEGAPVCDLDYDEDSSAETDMNLVMTETGKMIEIQGTAEGEPFSQEELMQLLELGKQGIQQIIQHQRQALA.

Residues Arg-86 and Gly-124–Arg-126 each bind phosphate.

This sequence belongs to the RNase PH family. Homohexameric ring arranged as a trimer of dimers.

The catalysed reaction is tRNA(n+1) + phosphate = tRNA(n) + a ribonucleoside 5'-diphosphate. Functionally, phosphorolytic 3'-5' exoribonuclease that plays an important role in tRNA 3'-end maturation. Removes nucleotide residues following the 3'-CCA terminus of tRNAs; can also add nucleotides to the ends of RNA molecules by using nucleoside diphosphates as substrates, but this may not be physiologically important. Probably plays a role in initiation of 16S rRNA degradation (leading to ribosome degradation) during starvation. The protein is Ribonuclease PH of Tolumonas auensis (strain DSM 9187 / NBRC 110442 / TA 4).